We begin with the raw amino-acid sequence, 414 residues long: Tryptophan synthase beta chain (414 aa).

Residue Lys-109 is modified to N6-(pyridoxal phosphate)lysine.

This sequence belongs to the TrpB family. Tetramer of two alpha and two beta chains. Requires pyridoxal 5'-phosphate as cofactor.

The catalysed reaction is (1S,2R)-1-C-(indol-3-yl)glycerol 3-phosphate + L-serine = D-glyceraldehyde 3-phosphate + L-tryptophan + H2O. It participates in amino-acid biosynthesis; L-tryptophan biosynthesis; L-tryptophan from chorismate: step 5/5. Functionally, the beta subunit is responsible for the synthesis of L-tryptophan from indole and L-serine. The polypeptide is Tryptophan synthase beta chain (Prochlorococcus marinus (strain AS9601)).